A 192-amino-acid chain; its full sequence is UPF0149 protein VP2588 (192 aa).

The protein belongs to the UPF0149 family.

This is UPF0149 protein VP2588 from Vibrio parahaemolyticus serotype O3:K6 (strain RIMD 2210633).